A 321-amino-acid polypeptide reads, in one-letter code: Ribose-phosphate pyrophosphokinase (321 aa).

ATP contacts are provided by residues 39-41 (DGE) and 98-99 (RQ). 2 residues coordinate Mg(2+): H132 and D170. The active site involves K195. D-ribose 5-phosphate-binding positions include R197, D221, and 225–229 (DTGGT).

The protein belongs to the ribose-phosphate pyrophosphokinase family. Class I subfamily. As to quaternary structure, homohexamer. Mg(2+) serves as cofactor.

Its subcellular location is the cytoplasm. The catalysed reaction is D-ribose 5-phosphate + ATP = 5-phospho-alpha-D-ribose 1-diphosphate + AMP + H(+). It functions in the pathway metabolic intermediate biosynthesis; 5-phospho-alpha-D-ribose 1-diphosphate biosynthesis; 5-phospho-alpha-D-ribose 1-diphosphate from D-ribose 5-phosphate (route I): step 1/1. In terms of biological role, involved in the biosynthesis of the central metabolite phospho-alpha-D-ribosyl-1-pyrophosphate (PRPP) via the transfer of pyrophosphoryl group from ATP to 1-hydroxyl of ribose-5-phosphate (Rib-5-P). The chain is Ribose-phosphate pyrophosphokinase from Mycoplasmopsis pulmonis (strain UAB CTIP) (Mycoplasma pulmonis).